The sequence spans 239 residues: Transcriptional regulatory protein BtsR (239 aa).

One can recognise a Response regulatory domain in the interval 3 to 116 (KVLIVDDEPL…RLEKTLHRLR (114 aa)). At aspartate 54 the chain carries 4-aspartylphosphate. Residues 137–239 (IPCTGHSRIY…LKSLKEAIGL (103 aa)) form the HTH LytTR-type domain.

In terms of processing, phosphorylated by BtsS.

Member of the two-component regulatory system BtsS/BtsR. BtsR regulates expression of btsT by binding to its promoter region. This chain is Transcriptional regulatory protein BtsR, found in Salmonella typhimurium (strain LT2 / SGSC1412 / ATCC 700720).